Reading from the N-terminus, the 146-residue chain is MGFTEKQEALVNSSWELFKQNPSYSVLFYTIILKKAPAAKGMFSFLKDSAEVVDSPKLQAHAEKVFGMVHDSAIQLRASGEVVLGDATLGAIHIQKGVVDPHFVVVKEALLETIKEASGEKWSEELSTAWEVAYEGLASAIKKAMN.

Residues 2–146 (GFTEKQEALV…LASAIKKAMN (145 aa)) enclose the Globin domain. 2 positions are modified to nitrated tyrosine: tyrosine 24 and tyrosine 29. Serine 44 serves as a coordination point for heme b. Serine 44 is subject to Phosphoserine. Histidine 61 is a binding site for O2. Residues lysine 64, histidine 93, and lysine 96 each contribute to the heme b site. Tyrosine 134 carries the nitrated tyrosine modification.

The protein belongs to the plant globin family. As to quaternary structure, monomer. Post-translationally, nitrated in effective nodules and particularly in hypoxic conditions; this mechanism may play a protective role in the symbiosis by buffering toxic peroxynitrite NO(2)(-). Nitration level decrease during nodule senescence. In terms of processing, phosphorylation at Ser-44 disrupts the molecular environment of its porphyrin ring oxygen binding pocket, thus leading to a reduced oxygen consumption and to the delivery of oxygen O(2) to symbiosomes. Root nodules.

It is found in the cytoplasm. The protein resides in the cytosol. It localises to the nucleus. Leghemoglobin that reversibly binds oxygen O(2) through a pentacoordinated heme iron. In root nodules, facilitates the diffusion of oxygen to the bacteroids while preventing the bacterial nitrogenase from being inactivated by buffering dioxygen, nitric oxide and carbon monoxide, and promoting the formation of reactive oxygen species (ROS, e.g. H(2)O(2)). This role is essential for symbiotic nitrogen fixation (SNF). The protein is Leghemoglobin Lb120-34 of Pisum sativum (Garden pea).